The primary structure comprises 138 residues: Putative nickel-responsive regulator (138 aa).

Residues H78, H89, H91, and C97 each contribute to the Ni(2+) site.

This sequence belongs to the transcriptional regulatory CopG/NikR family. Ni(2+) serves as cofactor.

In terms of biological role, transcriptional regulator. The protein is Putative nickel-responsive regulator of Desulfovibrio desulfuricans (strain ATCC 27774 / DSM 6949 / MB).